Reading from the N-terminus, the 237-residue chain is Uridylate kinase (237 aa).

9–12 lines the ATP pocket; it reads KFSG. The tract at residues 17 to 22 is involved in allosteric activation by GTP; the sequence is GEAGYG. G51 is a UMP binding site. Residues G52 and R56 each contribute to the ATP site. UMP-binding positions include D72 and 133 to 140; that span reads TGNPFFTT. ATP-binding residues include T160, Y166, and D169.

It belongs to the UMP kinase family. As to quaternary structure, homohexamer.

The protein resides in the cytoplasm. The catalysed reaction is UMP + ATP = UDP + ADP. It functions in the pathway pyrimidine metabolism; CTP biosynthesis via de novo pathway; UDP from UMP (UMPK route): step 1/1. Allosterically activated by GTP. Inhibited by UTP. Catalyzes the reversible phosphorylation of UMP to UDP. The sequence is that of Uridylate kinase from Sulfurimonas denitrificans (strain ATCC 33889 / DSM 1251) (Thiomicrospira denitrificans (strain ATCC 33889 / DSM 1251)).